We begin with the raw amino-acid sequence, 424 residues long: Keratin, type I cytoskeletal 20 (424 aa).

Positions 1-69 are head; it reads MDFSRRSFHR…TGGGDLFVGN (69 aa). Phosphoserine; by MAPKAPK2, MAPKAPK3 and PKC is present on Ser13. A coil 1A region spans residues 70–105; it reads EKMAMQNLNDRLASYLEKVRTLEQSNSKLEVQIKQW. Residues 70-381 form the IF rod domain; the sequence is EKMAMQNLND…RLLEGEDVKT (312 aa). The tract at residues 106 to 123 is linker 1; sequence YETNAPRAGRDYSAYYRQ. A coil 1B region spans residues 124 to 215; that stretch reads IEELRSQIKD…KEHQEEVDGL (92 aa). The interval 216 to 238 is linker 12; it reads HKHLGNTVNVEVDAAPGLNLGVI. Residues 239-377 are coil 2; it reads MNEMRQKYEV…ATYRRLLEGE (139 aa). The tail stretch occupies residues 378 to 424; it reads DVKTTEYQLSTLEERDIKKTRKIKTVVQEVVDGKVVSSEVKEVEENI.

This sequence belongs to the intermediate filament family. Heterotetramer of two type I and two type II keratins. Associates with KRT8. Hyperphosphorylation at Ser-13 occurs during the early stages of apoptosis but becomes less prominent during the later stages. Phosphorylation at Ser-13 also increases in response to stress brought on by cell injury. In terms of processing, proteolytically cleaved by caspases during apoptosis. Cleavage occurs at Asp-228. As to expression, expressed predominantly in the intestinal epithelium. Expressed in luminal cells of colonic mucosa. Also expressed in the Merkel cells of keratinized oral mucosa; specifically at the tips of some rete ridges of the gingival mucosa, in the basal layer of the palatal mucosa and in the taste buds of lingual mucosa.

The protein localises to the cytoplasm. Plays a significant role in maintaining keratin filament organization in intestinal epithelia. When phosphorylated, plays a role in the secretion of mucin in the small intestine. In Homo sapiens (Human), this protein is Keratin, type I cytoskeletal 20 (KRT20).